The chain runs to 486 residues: Amyloid-beta A4 precursor protein-binding family B member 3 (486 aa).

Residues 29–61 form the WW domain; it reads TGLPPGWRKIRDAAGTYYWHVPSGSTQWQRPTW. PID domains lie at 113–280 and 285–440; these read EPGA…QVEL and SQAA…RTSS. The disordered stretch occupies residues 438–460; it reads TSSMDSPGGPLPPPLLKGGAGGA.

Interacts with APP (via intracellular domain). Interacts with APLP1 and APLP2 (via intracellular domain).

Its subcellular location is the cytoplasm. The protein localises to the nucleus. May modulate the internalization of amyloid-beta precursor protein. The chain is Amyloid-beta A4 precursor protein-binding family B member 3 from Mus musculus (Mouse).